A 180-amino-acid polypeptide reads, in one-letter code: Endoribonuclease YbeY (180 aa).

3 residues coordinate Zn(2+): His-118, His-122, and His-128.

Belongs to the endoribonuclease YbeY family. It depends on Zn(2+) as a cofactor.

The protein localises to the cytoplasm. Its function is as follows. Single strand-specific metallo-endoribonuclease involved in late-stage 70S ribosome quality control and in maturation of the 3' terminus of the 16S rRNA. This is Endoribonuclease YbeY from Rhodococcus jostii (strain RHA1).